The following is a 90-amino-acid chain: uncharacterized protein (90 aa).

This is an uncharacterized protein from Aedes vexans (Inland floodwater mosquito).